The following is a 624-amino-acid chain: DNA-directed RNA polymerase subunit gamma (624 aa).

Zn(2+) contacts are provided by Cys70, Cys72, Cys85, and Cys88. Residues Asp466, Asp468, and Asp470 each coordinate Mg(2+).

It belongs to the RNA polymerase beta' chain family. RpoC1 subfamily. In terms of assembly, in cyanobacteria the RNAP catalytic core is composed of 2 alpha, 1 beta, 1 beta', 1 gamma and 1 omega subunit. When a sigma factor is associated with the core the holoenzyme is formed, which can initiate transcription. Requires Mg(2+) as cofactor. The cofactor is Zn(2+).

The enzyme catalyses RNA(n) + a ribonucleoside 5'-triphosphate = RNA(n+1) + diphosphate. In terms of biological role, DNA-dependent RNA polymerase catalyzes the transcription of DNA into RNA using the four ribonucleoside triphosphates as substrates. This chain is DNA-directed RNA polymerase subunit gamma, found in Synechococcus elongatus (strain ATCC 33912 / PCC 7942 / FACHB-805) (Anacystis nidulans R2).